Consider the following 398-residue polypeptide: Phosphoglycerate kinase (398 aa).

Residues 21-23, R36, 59-62, R119, and R157 contribute to the substrate site; these read DFN and HLGR. Residues K208, G296, E327, and 354–357 each bind ATP; that span reads GGDS.

Belongs to the phosphoglycerate kinase family. Monomer.

It localises to the cytoplasm. The catalysed reaction is (2R)-3-phosphoglycerate + ATP = (2R)-3-phospho-glyceroyl phosphate + ADP. The protein operates within carbohydrate degradation; glycolysis; pyruvate from D-glyceraldehyde 3-phosphate: step 2/5. In Streptococcus sanguinis (strain SK36), this protein is Phosphoglycerate kinase.